A 310-amino-acid polypeptide reads, in one-letter code: Coproporphyrin III ferrochelatase (310 aa).

The Fe(2+) site is built by His-184 and Glu-265.

This sequence belongs to the ferrochelatase family.

It is found in the cytoplasm. It catalyses the reaction Fe-coproporphyrin III + 2 H(+) = coproporphyrin III + Fe(2+). It participates in porphyrin-containing compound metabolism; protoheme biosynthesis. Involved in coproporphyrin-dependent heme b biosynthesis. Catalyzes the insertion of ferrous iron into coproporphyrin III to form Fe-coproporphyrin III. This Limosilactobacillus reuteri (strain DSM 20016) (Lactobacillus reuteri) protein is Coproporphyrin III ferrochelatase.